The following is a 119-amino-acid chain: Large ribosomal subunit protein uL22c (119 aa).

Belongs to the universal ribosomal protein uL22 family. In terms of assembly, part of the 50S ribosomal subunit.

The protein resides in the plastid. It localises to the chloroplast. Functionally, this protein binds specifically to 23S rRNA. Its function is as follows. The globular domain of the protein is located near the polypeptide exit tunnel on the outside of the subunit, while an extended beta-hairpin is found that lines the wall of the exit tunnel in the center of the 70S ribosome. The sequence is that of Large ribosomal subunit protein uL22c (rpl22) from Chlorokybus atmophyticus (Soil alga).